Consider the following 1193-residue polypeptide: DNA polymerase (1193 aa).

The segment at 1–88 (MALVQTHGSR…PAKKKRGTVV (88 aa)) is disordered. Residues 48–68 (PATTASGSRAAPTARRASSPP) show a composition bias toward low complexity.

Belongs to the DNA polymerase type-B family. In terms of assembly, heterodimer with the terminal protein; this heterodimer binds to bp 9 to 18 of the genome. Forms a complex with viral pTP, DBP and hosts NFIA and POU2F1/OCT1 for initiation of replication.

The protein resides in the host nucleus. It catalyses the reaction DNA(n) + a 2'-deoxyribonucleoside 5'-triphosphate = DNA(n+1) + diphosphate. Its function is as follows. Eukaryotic-type DNA polymerase involved in viral genomic replication. DNA synthesis is protein primed, and acts in a strand displacement replication. Assembles in complex with viral pTP, DBP, host NFIA and host POU2F1/OCT1 on viral origin of replication. The polymerase covalently transfers dCMP onto pTP, thereby initiating complementary strand synthesis. The polypeptide is DNA polymerase (Homo sapiens (Human)).